Here is a 141-residue protein sequence, read N- to C-terminus: Hemoglobin subunit alpha (141 aa).

The Globin domain maps to 1–141; it reads VLSSADKANI…VSTVLTSKYR (141 aa). Phosphoserine is present on Ser3. N6-succinyllysine is present on residues Lys7 and Lys11. At Lys16 the chain carries N6-acetyllysine; alternate. Position 16 is an N6-succinyllysine; alternate (Lys16). Position 24 is a phosphotyrosine (Tyr24). An N6-succinyllysine modification is found at Lys40. At Ser49 the chain carries Phosphoserine. O2 is bound at residue His58. His87 contributes to the heme b binding site. Ser102 is modified (phosphoserine). At Thr108 the chain carries Phosphothreonine. 2 positions are modified to phosphoserine: Ser124 and Ser131. Residues Thr134 and Thr137 each carry the phosphothreonine modification. The residue at position 138 (Ser138) is a Phosphoserine.

It belongs to the globin family. In terms of assembly, heterotetramer of two alpha chains and two beta chains. Red blood cells.

In terms of biological role, involved in oxygen transport from the lung to the various peripheral tissues. Its function is as follows. Hemopressin acts as an antagonist peptide of the cannabinoid receptor CNR1. Hemopressin-binding efficiently blocks cannabinoid receptor CNR1 and subsequent signaling. The polypeptide is Hemoglobin subunit alpha (HBA) (Proteles cristata (Aardwolf)).